Consider the following 77-residue polypeptide: Defensin-like protein 161 (77 aa).

The N-terminal stretch at methionine 1 to glycine 27 is a signal peptide. Disulfide bonds link cysteine 30/cysteine 77, cysteine 40/cysteine 59, cysteine 45/cysteine 71, and cysteine 49/cysteine 73.

It belongs to the DEFL family.

Its subcellular location is the secreted. The chain is Defensin-like protein 161 (LCR27) from Arabidopsis thaliana (Mouse-ear cress).